We begin with the raw amino-acid sequence, 402 residues long: Triose phosphate/phosphate translocator, chloroplastic (402 aa).

A chloroplast-targeting transit peptide spans 1–72; that stretch reads MESRVLSRAT…KGASLLRPCP (72 aa). Residues 73–96 lie on the Chloroplast intermembrane side of the membrane; the sequence is ATAGGNDSAGEEKVAPVGFFSRYP. A helical membrane pass occupies residues 97-117; it reads ALTTGFFFFTWYFLNVIFNIL. The Lumenal segment spans residues 118-129; the sequence is NKKIYNYFPYPY. The helical transmembrane segment at 130–150 threads the bilayer; it reads FVSVIHLAVGVVYCLVSWTVG. Residues 151-207 lie on the Chloroplast intermembrane side of the membrane; that stretch reads LPKRAPIDGNLLKLLIPVAVCHALGHVTSNVSFAAVAVSFTHTVKALEPFFNAAASQ. The helical transmembrane segment at 208–228 threads the bilayer; it reads FILGQSIPITLWLSLAPVVIG. The Lumenal portion of the chain corresponds to 229-272; sequence VSMASLTELSFNWLGFISAMISNISFTYRSIYSKKAMTDMDSTN. A helical membrane pass occupies residues 273–292; sequence IYAYISIIALIVCIPPALII. At 293–370 the chain is on the chloroplast intermembrane side; sequence EGPTLLKTGF…IIFGNKISTQ (78 aa). A helical membrane pass occupies residues 371-391; it reads TGIGTGIAIAGVALYSFIKAQ. Residues 392 to 402 are Lumenal-facing; the sequence is IEEEKRQAKAA.

Belongs to the TPT transporter family. TPT (TC 2.A.7.9) subfamily. As to quaternary structure, homodimer.

Its subcellular location is the plastid. It localises to the chloroplast membrane. In terms of biological role, mediates the export of fixed carbons from the chloroplasts into the cytosol in the form of triose phosphates. The polypeptide is Triose phosphate/phosphate translocator, chloroplastic (Pisum sativum (Garden pea)).